Consider the following 530-residue polypeptide: Apolipoprotein N-acyltransferase (530 aa).

Helical transmembrane passes span 19–39, 65–85, 96–116, 128–148, 169–189, and 197–217; these read LIAG…PGLL, WLAG…AFLV, FAVT…ALLY, LTFA…LTGF, LVGA…PAVW, and AATG…AIAL. The 254-residue stretch at 232–485 folds into the CN hydrolase domain; sequence VQADIKQDLK…SGVIDAQIPG (254 aa). Residue glutamate 274 is the Proton acceptor of the active site. Residue lysine 343 is part of the active site. Cysteine 396 functions as the Nucleophile in the catalytic mechanism.

This sequence belongs to the CN hydrolase family. Apolipoprotein N-acyltransferase subfamily.

Its subcellular location is the cell inner membrane. It catalyses the reaction N-terminal S-1,2-diacyl-sn-glyceryl-L-cysteinyl-[lipoprotein] + a glycerophospholipid = N-acyl-S-1,2-diacyl-sn-glyceryl-L-cysteinyl-[lipoprotein] + a 2-acyl-sn-glycero-3-phospholipid + H(+). Its pathway is protein modification; lipoprotein biosynthesis (N-acyl transfer). Functionally, catalyzes the phospholipid dependent N-acylation of the N-terminal cysteine of apolipoprotein, the last step in lipoprotein maturation. The polypeptide is Apolipoprotein N-acyltransferase (Caulobacter vibrioides (strain ATCC 19089 / CIP 103742 / CB 15) (Caulobacter crescentus)).